Reading from the N-terminus, the 282-residue chain is Probable transcription factor At1g66420 (282 aa).

The interval 33–73 is disordered; sequence SKKNEEFCGGSGKVQPSEMKRRSEGTSTDMTSKRAKKVSAE.

It belongs to the GeBP family.

The protein is Probable transcription factor At1g66420 of Arabidopsis thaliana (Mouse-ear cress).